Here is a 146-residue protein sequence, read N- to C-terminus: Endoribonuclease YbeY (146 aa).

Zn(2+)-binding residues include histidine 108, histidine 112, and histidine 118.

It belongs to the endoribonuclease YbeY family. Zn(2+) serves as cofactor.

It is found in the cytoplasm. In terms of biological role, single strand-specific metallo-endoribonuclease involved in late-stage 70S ribosome quality control and in maturation of the 3' terminus of the 16S rRNA. This is Endoribonuclease YbeY from Aster yellows witches'-broom phytoplasma (strain AYWB).